The chain runs to 156 residues: ATP synthase subunit b (156 aa).

A helical transmembrane segment spans residues Leu7–Leu29.

The protein belongs to the ATPase B chain family. In terms of assembly, F-type ATPases have 2 components, F(1) - the catalytic core - and F(0) - the membrane proton channel. F(1) has five subunits: alpha(3), beta(3), gamma(1), delta(1), epsilon(1). F(0) has three main subunits: a(1), b(2) and c(10-14). The alpha and beta chains form an alternating ring which encloses part of the gamma chain. F(1) is attached to F(0) by a central stalk formed by the gamma and epsilon chains, while a peripheral stalk is formed by the delta and b chains.

The protein resides in the cell inner membrane. F(1)F(0) ATP synthase produces ATP from ADP in the presence of a proton or sodium gradient. F-type ATPases consist of two structural domains, F(1) containing the extramembraneous catalytic core and F(0) containing the membrane proton channel, linked together by a central stalk and a peripheral stalk. During catalysis, ATP synthesis in the catalytic domain of F(1) is coupled via a rotary mechanism of the central stalk subunits to proton translocation. Its function is as follows. Component of the F(0) channel, it forms part of the peripheral stalk, linking F(1) to F(0). This chain is ATP synthase subunit b, found in Shewanella frigidimarina (strain NCIMB 400).